The primary structure comprises 55 residues: Large ribosomal subunit protein bL33 (55 aa).

Belongs to the bacterial ribosomal protein bL33 family.

The sequence is that of Large ribosomal subunit protein bL33 from Bartonella quintana (strain Toulouse) (Rochalimaea quintana).